Reading from the N-terminus, the 405-residue chain is Probable tRNA sulfurtransferase (405 aa).

One can recognise a THUMP domain in the interval 60–165; that stretch reads DAVINRLKKV…SNGIFLTSEV (106 aa). ATP contacts are provided by residues 183–184, 208–209, R265, G287, and Q296; these read ML and HF.

It belongs to the ThiI family.

Its subcellular location is the cytoplasm. The enzyme catalyses [ThiI sulfur-carrier protein]-S-sulfanyl-L-cysteine + a uridine in tRNA + 2 reduced [2Fe-2S]-[ferredoxin] + ATP + H(+) = [ThiI sulfur-carrier protein]-L-cysteine + a 4-thiouridine in tRNA + 2 oxidized [2Fe-2S]-[ferredoxin] + AMP + diphosphate. The catalysed reaction is [ThiS sulfur-carrier protein]-C-terminal Gly-Gly-AMP + S-sulfanyl-L-cysteinyl-[cysteine desulfurase] + AH2 = [ThiS sulfur-carrier protein]-C-terminal-Gly-aminoethanethioate + L-cysteinyl-[cysteine desulfurase] + A + AMP + 2 H(+). The protein operates within cofactor biosynthesis; thiamine diphosphate biosynthesis. Catalyzes the ATP-dependent transfer of a sulfur to tRNA to produce 4-thiouridine in position 8 of tRNAs, which functions as a near-UV photosensor. Also catalyzes the transfer of sulfur to the sulfur carrier protein ThiS, forming ThiS-thiocarboxylate. This is a step in the synthesis of thiazole, in the thiamine biosynthesis pathway. The sulfur is donated as persulfide by IscS. The chain is Probable tRNA sulfurtransferase from Pediococcus pentosaceus (strain ATCC 25745 / CCUG 21536 / LMG 10740 / 183-1w).